Consider the following 381-residue polypeptide: Ribosomal lysine N-methyltransferase set11 (381 aa).

Residues 23 to 224 (PSLEFSVIPD…KGEQIFLCYG (202 aa)) form the SET domain. Tyrosine 223 provides a ligand contact to S-adenosyl-L-methionine.

The protein belongs to the class V-like SAM-binding methyltransferase superfamily. RKM2 family.

Its subcellular location is the cytoplasm. The protein resides in the nucleus. It localises to the nucleolus. S-adenosyl-L-methionine-dependent protein-lysine N-methyltransferase that trimethylates 60S ribosomal protein L12 (rpl1201 and rpl1202) at 'Lys-4' and may dimethylate L12 also at 'Lys-40' and 'Lys-41'. Overexpression causes a severe growth defect. Has a role in meiosis. The chain is Ribosomal lysine N-methyltransferase set11 (set11) from Schizosaccharomyces pombe (strain 972 / ATCC 24843) (Fission yeast).